The chain runs to 871 residues: DNA mismatch repair protein MutS (871 aa).

G625–S632 contacts ATP.

This sequence belongs to the DNA mismatch repair MutS family.

In terms of biological role, this protein is involved in the repair of mismatches in DNA. It is possible that it carries out the mismatch recognition step. This protein has a weak ATPase activity. The polypeptide is DNA mismatch repair protein MutS (Chlorobium limicola (strain DSM 245 / NBRC 103803 / 6330)).